The following is a 380-amino-acid chain: Probable RAD2-like endonuclease 076L (380 aa).

The tract at residues 1-101 (MGIKNLTQFL…QKIVSKTDAI (101 aa)) is N-domain. Positions 32, 73, 191, 193, 212, 214, and 281 each coordinate Mg(2+). Residues 156-301 (IDRRRKYEFS…EKAYKYISDY (146 aa)) are I-domain.

The protein belongs to the XPG/RAD2 endonuclease family. The cofactor is Mg(2+).

It is found in the host nucleus. Its function is as follows. Probable endonuclease. This is Probable RAD2-like endonuclease 076L from Invertebrate iridescent virus 3 (IIV-3).